Reading from the N-terminus, the 236-residue chain is Urease accessory protein UreG 2 (236 aa).

A disordered region spans residues 1 to 40 (MEASVHIGNSVPHAHLHSAAPARPADPVRPDGSRRALRIG). 43-50 (GPVGSGKT) contacts GTP.

This sequence belongs to the SIMIBI class G3E GTPase family. UreG subfamily. In terms of assembly, homodimer. UreD, UreF and UreG form a complex that acts as a GTP-hydrolysis-dependent molecular chaperone, activating the urease apoprotein by helping to assemble the nickel containing metallocenter of UreC. The UreE protein probably delivers the nickel.

It localises to the cytoplasm. In terms of biological role, facilitates the functional incorporation of the urease nickel metallocenter. This process requires GTP hydrolysis, probably effectuated by UreG. The polypeptide is Urease accessory protein UreG 2 (Saccharopolyspora erythraea (strain ATCC 11635 / DSM 40517 / JCM 4748 / NBRC 13426 / NCIMB 8594 / NRRL 2338)).